We begin with the raw amino-acid sequence, 118 residues long: Acidic elicitin A1 (118 aa).

The signal sequence occupies residues 1-20; that stretch reads MNFRALFAATVAALVGSTSA. Intrachain disulfides connect Cys23-Cys91, Cys47-Cys76, and Cys71-Cys115.

The protein belongs to the elicitin family.

It localises to the secreted. Induces local and distal defense responses (incompatible hypersensitive reaction) in plants from the solanaceae and cruciferae families. Elicits leaf necrosis and causes the accumulation of pathogenesis-related proteins. Might interact with the lipidic molecules of the plasma membrane. This chain is Acidic elicitin A1 (B14), found in Phytophthora cryptogea.